Reading from the N-terminus, the 837-residue chain is MEPAAAGPGPLIVNNKQPQPPPPPPPATAQPPPGAPRAAGGLLPGGKAREFNRNQRKDSEGYSESPDLEFEYADTDKWAAELAELYSYTEGPEFLMNRKCFEEDFRIHVSDKKWTELDTNQHRTHAMRLLDGLEVTAREKRLKVARAILYVAQGTFGECSSEAEVQFWMRYNIFLLLEVGTFNALVELLNMEIDNSAACSSAVRKPAISLADSTDLRVLLNIMYLIVETVHQDCDGDKAEWRTMRQTFRAELGSPLYNNEPFAIMLFGMVTKFCSGHAPHFPMKKVLLLLWKTVLCTLGGFEELQSMKAEKRTLLGLPPLPEDSIKVIRNMRAASPPASASDLIEQQQKRGRREHKALIKQDNLDAFNERDPYKADDSREEEEENDDDSSLEGEAFPLERDEVMPPPLQHPQTDRLTCPKGLPWAPKVREKDIEMFLESSRSKFIGYTLGSDTNTVVGLPRPIHESIKTLKQHKYTSIAEVQAQMEEEYLRSPLSGGEEEVEQVPAETLYQGLLPSLPQYMIALLKILLAAAPTSKAKTDSINILADVLPEEMPTTVLQSMKLGVDVNRHKEVIVKAISAVLLLLLKHFKLNHIYQFEYMAQHLVFANCIPLILKFFNQNIMSYITAKNSISVLDYPHCVVNELPELTAESLEAGDNNQFCWRNLFSCINLLRILNKLTKWKHSRTMMLVVFKSAPILKRALKVKQAMMQLYVLKLLKVQTKYLGRQWRKSNMKTMSAIYQKVRHRLNDDWAYGNDLDARPWDFQAEECALRANIERFNARRYDRTHSNPDFLPVDNCLQSVLGQRVDLPEDFQMNYDLWLEREVFSKPISWEELLQ.

M1 bears the N-acetylmethionine mark. Disordered stretches follow at residues 1-67 and 333-423; these read MEPA…ESPD and AASP…KGLP. Residues 18–35 are compositionally biased toward pro residues; that stretch reads PQPPPPPPPATAQPPPGA. A compositionally biased stretch (basic and acidic residues) spans 47 to 60; it reads KAREFNRNQRKDSE. Residues S59, S335, and S339 each carry the phosphoserine modification. The span at 356 to 377 shows a compositional bias: basic and acidic residues; that stretch reads KALIKQDNLDAFNERDPYKADD. A compositionally biased stretch (acidic residues) spans 378–391; that stretch reads SREEEEENDDDSSL. S788 is subject to Phosphoserine. The interval 796 to 837 is required for STRIPAK core complex formation; sequence DNCLQSVLGQRVDLPEDFQMNYDLWLEREVFSKPISWEELLQ.

The protein belongs to the STRIP family. In terms of assembly, part of the core of STRIPAK complexes composed of PP2A catalytic and scaffolding subunits, the striatins (PP2A regulatory subunits), the striatin-associated proteins MOB4, STRIP1 and STRIP2, PDCD10 and members of the STE20 kinases, such as STK24 and STK26. The STRIPAK complex can be extended by adapter proteins such as SLMAP:SIKE1, CTTNBP2 or CTTNBP2NL. Interacts with CDC42BPB. Interacts with CTTNBP2NL.

Its subcellular location is the cytoplasm. In terms of biological role, plays a role in the regulation of cell morphology and cytoskeletal organization. Required in the cortical actin filament dynamics and cell shape. Part of the striatin-interacting phosphatase and kinase (STRIPAK) complexes. STRIPAK complexes have critical roles in protein (de)phosphorylation and are regulators of multiple signaling pathways including Hippo, MAPK, nuclear receptor and cytoskeleton remodeling. Different types of STRIPAK complexes are involved in a variety of biological processes such as cell growth, differentiation, apoptosis, metabolism and immune regulation. In Mus musculus (Mouse), this protein is Striatin-interacting protein 1 (Strip1).